The primary structure comprises 703 residues: Stonustoxin subunit alpha (703 aa).

The segment at 2-265 (SSDLVMPALG…KAQQLIQEIN (264 aa)) is structural MACPF/CDC pore-forming domain. Positions 266-385 (VSKVRRIHTT…GMVEGTQAKF (120 aa)) are structural FAT domain. Residues 386–517 (VSNQTELDRE…PRMPFVQGYK (132 aa)) form a thioredoxin (THX) domain region. Positions 508–703 (PRMPFVQGYK…AGNHGTLRLL (196 aa)) constitute a B30.2/SPRY domain.

Belongs to the SNTX/VTX toxin family. In terms of assembly, heterodimer of alpha and beta subunits; non-covalently linked. Intrachain disulfide bonds may be present in the heterodimer. Post-translationally, not glycosylated. Expressed by the venom gland.

It is found in the secreted. This lethal (towards mammals) heterodimer induces hemolytic activities due to its ability to form pores in the cell membrane. The pore may be composed of 10 SNTX-alpha/beta heterodimers. The toxin elicits potent hypotension which is endothelium-dependent and appears to be mediated by the nitric oxide pathway and activation of potassium channels. In addition, it displays edema-inducing activities, increases vascular permeability. It also shows myotoxic activities and interferes irreversibly with neuromuscular function. It also induces irreversible platelet aggregation in rabbit or rat (but not in human or mouse) whole blood. In addition, it has been observed to increase spontaneous quantal acetylcholine release from isolated frog cutaneous pectoris motor endings. The sequence is that of Stonustoxin subunit alpha from Synanceia horrida (Estuarine stonefish).